The sequence spans 274 residues: Isoprenyl transferase (274 aa).

Asp-49 is an active-site residue. Asp-49 provides a ligand contact to Mg(2+). Residues 50–53 (GNRR), Phe-54, Arg-62, His-66, and 94–96 (STD) each bind substrate. Asn-97 serves as the catalytic Proton acceptor. Residues Arg-100, Arg-223, and 229–231 (RLS) each bind substrate. Glu-242 contributes to the Mg(2+) binding site.

This sequence belongs to the UPP synthase family. In terms of assembly, homodimer. Requires Mg(2+) as cofactor.

Functionally, catalyzes the condensation of isopentenyl diphosphate (IPP) with allylic pyrophosphates generating different type of terpenoids. The protein is Isoprenyl transferase of Deinococcus radiodurans (strain ATCC 13939 / DSM 20539 / JCM 16871 / CCUG 27074 / LMG 4051 / NBRC 15346 / NCIMB 9279 / VKM B-1422 / R1).